Consider the following 115-residue polypeptide: MASQPAVSALSAYRQVLRATRIAFQNDTRVLLAARQEARQNFEKHRRYGVDTPMQINHALEVASILRHNIVQGARDAEDENAKWELRIHDEIERGDNDSIKVAGKKVKVDKPCSS.

This sequence belongs to the complex I LYR family. MZM1 subfamily. As to quaternary structure, interacts with RIP1.

It localises to the mitochondrion matrix. Functionally, assembly factor required for Rieske Fe-S protein RIP1 incorporation into the cytochrome b-c1 (CIII) complex. Functions as a chaperone, binding to this subunit within the mitochondrial matrix and stabilizing it prior to its translocation and insertion into the late CIII dimeric intermediate within the mitochondrial inner membrane. Modulates the mitochondrial matrix zinc pool. The polypeptide is Mitochondrial zinc maintenance protein 1, mitochondrial (MZM1) (Emericella nidulans (strain FGSC A4 / ATCC 38163 / CBS 112.46 / NRRL 194 / M139) (Aspergillus nidulans)).